Reading from the N-terminus, the 394-residue chain is Nuclear hormone receptor family member nhr-103 (394 aa).

The nuclear receptor DNA-binding region spans 8–83 (SGPCEICGQK…VGMDSKKFQT (76 aa)). The NR C4-type zinc-finger motif lies at 11-31 (CEICGQKTSGRHFGVLSCRSC). Residues 47-66 (QCVKGTCKIFEDGKFNCKQC) form an NR C4-type; degenerate zinc finger. An NR LBD domain is found at 126–394 (YLVDMAKNLL…FSHPEMFETT (269 aa)).

This sequence belongs to the nuclear hormone receptor family.

It is found in the nucleus. Its function is as follows. Orphan nuclear receptor. The sequence is that of Nuclear hormone receptor family member nhr-103 (nhr-103) from Caenorhabditis elegans.